The primary structure comprises 471 residues: Arginine biosynthesis bifunctional protein ArgJ, mitochondrial (471 aa).

Thr190, Lys216, Thr239, Glu327, Asn466, and Ser471 together coordinate substrate. Catalysis depends on Thr239, which acts as the Nucleophile.

The protein belongs to the ArgJ family. In terms of assembly, heterodimer of an alpha and a beta chain. Post-translationally, the alpha and beta chains are autoproteolytically processed from a single precursor protein within the mitochondrion.

The protein resides in the mitochondrion matrix. It carries out the reaction N(2)-acetyl-L-ornithine + L-glutamate = N-acetyl-L-glutamate + L-ornithine. The catalysed reaction is L-glutamate + acetyl-CoA = N-acetyl-L-glutamate + CoA + H(+). The protein operates within amino-acid biosynthesis; L-arginine biosynthesis; L-ornithine and N-acetyl-L-glutamate from L-glutamate and N(2)-acetyl-L-ornithine (cyclic): step 1/1. It functions in the pathway amino-acid biosynthesis; L-arginine biosynthesis; N(2)-acetyl-L-ornithine from L-glutamate: step 1/4. Functionally, catalyzes two activities which are involved in the cyclic version of arginine biosynthesis: the synthesis of acetylglutamate from glutamate and acetyl-CoA, and of ornithine by transacetylation between acetylornithine and glutamate. This is Arginine biosynthesis bifunctional protein ArgJ, mitochondrial from Coprinopsis cinerea (strain Okayama-7 / 130 / ATCC MYA-4618 / FGSC 9003) (Inky cap fungus).